Consider the following 72-residue polypeptide: Phaiodotoxin-3 (72 aa).

The region spanning 1 to 72 (KFIRHKDESF…CFGALESKCA (72 aa)) is the LCN-type CS-alpha/beta domain. 4 disulfides stabilise this stretch: Cys13–Cys38, Cys23–Cys50, Cys27–Cys52, and Cys63–Cys71.

This sequence belongs to the long (4 C-C) scorpion toxin superfamily. Sodium channel inhibitor family. As to expression, expressed by the venom gland.

Its subcellular location is the secreted. Functionally, sodium channel (Nav) specific neurotoxin. The polypeptide is Phaiodotoxin-3 (Anuroctonus phaiodactylus (Mafia scorpion)).